We begin with the raw amino-acid sequence, 500 residues long: Protein gar2 (500 aa).

Basic and acidic residues-rich tracts occupy residues 1-41 (MAKK…KEIA) and 59-68 (KRASSPEPSK). The disordered stretch occupies residues 1-262 (MAKKDKTSVK…TKPSQDSNET (262 aa)). Residues 69–78 (KSVKKQKKSK) show a composition bias toward basic residues. Over residues 90–120 (ESSSSESESSSSESESSSSESESSSSESSSS) the composition is skewed to low complexity. Residues 126 to 137 (VIVKTEEKKESS) are compositionally biased toward basic and acidic residues. 3 positions are modified to phosphoserine: serine 143, serine 144, and serine 146. The segment covering 152–163 (AVVKIEEKKESS) has biased composition (basic and acidic residues). Residues 164–182 (SDSSSESSSSESESESSSS) show a composition bias toward low complexity. The span at 191–201 (VEKTEEKKEGS) shows a compositional bias: basic and acidic residues. Residues 202–218 (SESSSDSESSSDSSSES) are compositionally biased toward low complexity. Acidic residues predominate over residues 219-233 (GDSDSSSDSESESSS). Basic and acidic residues predominate over residues 234 to 250 (EDEKKRKAEPASEERPA). RRM domains lie at 263–341 (CTVF…LSNP) and 366–443 (DTVF…FSTP). The segment at 441-500 (STPRTGGGSRGGRGGFGGRGGFGGRGGFGGGRGRGRGGARSGNPNRGSVAPFSGNKVTFD) is disordered. Over residues 445-480 (TGGGSRGGRGGFGGRGGFGGRGGFGGGRGRGRGGAR) the composition is skewed to gly residues.

Belongs to the RRM GAR family.

The protein localises to the nucleus. It localises to the nucleolus. Functionally, helps the assembly of pre-ribosomal particles containing 18S rRNA. This chain is Protein gar2 (gar2), found in Schizosaccharomyces pombe (strain 972 / ATCC 24843) (Fission yeast).